We begin with the raw amino-acid sequence, 651 residues long: Acetyl-coenzyme A synthetase (651 aa).

Residues R190–R193, T309, and N333 contribute to the CoA site. Residues G385–P387, D409–T414, D498, and R513 contribute to the ATP site. S521 contacts CoA. An ATP-binding site is contributed by R524. Mg(2+) contacts are provided by V535, H537, and V540. CoA is bound at residue R582. K607 is subject to N6-acetyllysine.

This sequence belongs to the ATP-dependent AMP-binding enzyme family. Mg(2+) serves as cofactor. Acetylated. Deacetylation by the SIR2-homolog deacetylase activates the enzyme.

It catalyses the reaction acetate + ATP + CoA = acetyl-CoA + AMP + diphosphate. In terms of biological role, catalyzes the conversion of acetate into acetyl-CoA (AcCoA), an essential intermediate at the junction of anabolic and catabolic pathways. AcsA undergoes a two-step reaction. In the first half reaction, AcsA combines acetate with ATP to form acetyl-adenylate (AcAMP) intermediate. In the second half reaction, it can then transfer the acetyl group from AcAMP to the sulfhydryl group of CoA, forming the product AcCoA. This chain is Acetyl-coenzyme A synthetase, found in Xanthobacter autotrophicus (strain ATCC BAA-1158 / Py2).